The following is a 269-amino-acid chain: Formamidopyrimidine-DNA glycosylase (269 aa).

Pro-2 serves as the catalytic Schiff-base intermediate with DNA. Catalysis depends on Glu-3, which acts as the Proton donor. Lys-57 serves as the catalytic Proton donor; for beta-elimination activity. Positions 90, 109, and 150 each coordinate DNA. The FPG-type zinc finger occupies 235-269 (QVYGREGEPCRVCGTPILAGKHAQRRTYWCRRCQK). Arg-259 (proton donor; for delta-elimination activity) is an active-site residue.

The protein belongs to the FPG family. In terms of assembly, monomer. Zn(2+) is required as a cofactor.

It catalyses the reaction Hydrolysis of DNA containing ring-opened 7-methylguanine residues, releasing 2,6-diamino-4-hydroxy-5-(N-methyl)formamidopyrimidine.. The enzyme catalyses 2'-deoxyribonucleotide-(2'-deoxyribose 5'-phosphate)-2'-deoxyribonucleotide-DNA = a 3'-end 2'-deoxyribonucleotide-(2,3-dehydro-2,3-deoxyribose 5'-phosphate)-DNA + a 5'-end 5'-phospho-2'-deoxyribonucleoside-DNA + H(+). Functionally, involved in base excision repair of DNA damaged by oxidation or by mutagenic agents. Acts as a DNA glycosylase that recognizes and removes damaged bases. Has a preference for oxidized purines, such as 7,8-dihydro-8-oxoguanine (8-oxoG). Has AP (apurinic/apyrimidinic) lyase activity and introduces nicks in the DNA strand. Cleaves the DNA backbone by beta-delta elimination to generate a single-strand break at the site of the removed base with both 3'- and 5'-phosphates. The protein is Formamidopyrimidine-DNA glycosylase of Cronobacter sakazakii (strain ATCC BAA-894) (Enterobacter sakazakii).